The following is a 393-amino-acid chain: Enoyl-[acyl-carrier-protein] reductase [NADH] (393 aa).

NAD(+)-binding positions include 48-53 (GSSTGY), 74-75 (FE), 111-112 (DA), and 139-140 (LA). Position 225 (Tyr225) interacts with substrate. Tyr235 functions as the Proton donor in the catalytic mechanism. NAD(+)-binding positions include Lys244 and 273-275 (LVT).

It belongs to the TER reductase family. Monomer.

The catalysed reaction is a 2,3-saturated acyl-[ACP] + NAD(+) = a (2E)-enoyl-[ACP] + NADH + H(+). It participates in lipid metabolism; fatty acid biosynthesis. Its function is as follows. Involved in the final reduction of the elongation cycle of fatty acid synthesis (FAS II). Catalyzes the reduction of a carbon-carbon double bond in an enoyl moiety that is covalently linked to an acyl carrier protein (ACP). This is Enoyl-[acyl-carrier-protein] reductase [NADH] from Pseudoalteromonas atlantica (strain T6c / ATCC BAA-1087).